Reading from the N-terminus, the 175-residue chain is UPF0398 protein SUB1405 (175 aa).

This sequence belongs to the UPF0398 family.

The polypeptide is UPF0398 protein SUB1405 (Streptococcus uberis (strain ATCC BAA-854 / 0140J)).